Consider the following 350-residue polypeptide: Heat-inducible transcription repressor HrcA (350 aa).

The protein belongs to the HrcA family.

Negative regulator of class I heat shock genes (grpE-dnaK-dnaJ and groELS operons). Prevents heat-shock induction of these operons. In Limosilactobacillus reuteri (strain DSM 20016) (Lactobacillus reuteri), this protein is Heat-inducible transcription repressor HrcA.